The sequence spans 312 residues: Olfactory receptor 10D3 (312 aa).

The Extracellular segment spans residues 1–26 (MEVKNCCMVTEFILLGIPHTEGLEMT). Residues 27–47 (LFVLFLPFYACTLLGNVSILV) form a helical membrane-spanning segment. Over 48-57 (AVMSSARLHT) the chain is Cytoplasmic. Residues 58-78 (PMYFFLGNLSVFDMGFSSVTC) traverse the membrane as a helical segment. Residues 79–97 (PKMLLYLMGLSRLISYKDC) are Extracellular-facing. Cys-97 and Cys-179 are joined by a disulfide. Residues 98 to 118 (VCQLFFFHFLGSIECFLFTVM) traverse the membrane as a helical segment. Over 119–139 (AYDRFTAICYPLRYTVIMNPR) the chain is Cytoplasmic. Residues 140 to 160 (ICVALAVGTWLLGCIHSSILT) traverse the membrane as a helical segment. At 161 to 197 (SLTFTLPYCGPNEVDHFFCDIPALLPLACADTSLAQR) the chain is on the extracellular side. The chain crosses the membrane as a helical span at residues 198 to 218 (VSFTNVGLISLVCFLLILLSY). Residues 219–239 (TRITISILSIRTTEGRRRAFS) lie on the Cytoplasmic side of the membrane. A helical transmembrane segment spans residues 240 to 260 (TCSAHLIAILCAYGPIITVYL). The Extracellular segment spans residues 261 to 266 (QPTPNP). Residues 267–287 (MLGTVVQILMNLVGPMLNPLI) form a helical membrane-spanning segment. The Cytoplasmic portion of the chain corresponds to 288–312 (YTLRNKEVKTALKTILHRTGHVPES).

The protein belongs to the G-protein coupled receptor 1 family.

The protein localises to the cell membrane. Its function is as follows. Odorant receptor. This chain is Olfactory receptor 10D3, found in Homo sapiens (Human).